A 163-amino-acid polypeptide reads, in one-letter code: 6,7-dimethyl-8-ribityllumazine synthase (163 aa).

5-amino-6-(D-ribitylamino)uracil-binding positions include F22, 56-58, and 80-82; these read TFE and AVI. 85 to 86 contacts (2S)-2-hydroxy-3-oxobutyl phosphate; the sequence is GT. H88 acts as the Proton donor in catalysis. M113 is a 5-amino-6-(D-ribitylamino)uracil binding site. R127 is a (2S)-2-hydroxy-3-oxobutyl phosphate binding site.

The protein belongs to the DMRL synthase family.

It catalyses the reaction (2S)-2-hydroxy-3-oxobutyl phosphate + 5-amino-6-(D-ribitylamino)uracil = 6,7-dimethyl-8-(1-D-ribityl)lumazine + phosphate + 2 H2O + H(+). It participates in cofactor biosynthesis; riboflavin biosynthesis; riboflavin from 2-hydroxy-3-oxobutyl phosphate and 5-amino-6-(D-ribitylamino)uracil: step 1/2. In terms of biological role, catalyzes the formation of 6,7-dimethyl-8-ribityllumazine by condensation of 5-amino-6-(D-ribitylamino)uracil with 3,4-dihydroxy-2-butanone 4-phosphate. This is the penultimate step in the biosynthesis of riboflavin. In Anaeromyxobacter sp. (strain Fw109-5), this protein is 6,7-dimethyl-8-ribityllumazine synthase.